Reading from the N-terminus, the 1339-residue chain is DNA polymerase alpha catalytic subunit (1339 aa).

Disordered regions lie at residues 1 to 90 (MSGG…SMSD) and 177 to 203 (NVER…GYRN). Basic and acidic residues predominate over residues 27 to 36 (DQWRSLREEV). Positions 79–89 (PKQQTLAQSMS) are enriched in polar residues. Zn(2+) is bound by residues C1179, C1182, C1213, C1216, C1233, C1243, C1271, and C1286. The CysA-type zinc-finger motif lies at 1179–1216 (CTHCRLMTPINPHTRVMEVLADQERQRDRFDLYVCVSC). The CysB motif signature appears at 1243-1271 (CGSAAAVKAVRTQFTYYRALFDVPHAPGC).

This sequence belongs to the DNA polymerase type-B family.

It localises to the nucleus. It catalyses the reaction DNA(n) + a 2'-deoxyribonucleoside 5'-triphosphate = DNA(n+1) + diphosphate. In terms of biological role, polymerase alpha in a complex with DNA primase is a replicative polymerase. The polypeptide is DNA polymerase alpha catalytic subunit (Leishmania donovani).